We begin with the raw amino-acid sequence, 172 residues long: 3-phenylpropionate/cinnamic acid dioxygenase subunit beta (172 aa).

The protein belongs to the bacterial ring-hydroxylating dioxygenase beta subunit family. This dioxygenase system consists of four proteins: the two subunits of the hydroxylase component (HcaE and HcaF), a ferredoxin (HcaC) and a ferredoxin reductase (HcaD).

It carries out the reaction 3-phenylpropanoate + NADH + O2 + H(+) = 3-(cis-5,6-dihydroxycyclohexa-1,3-dien-1-yl)propanoate + NAD(+). The enzyme catalyses (E)-cinnamate + NADH + O2 + H(+) = (2E)-3-(cis-5,6-dihydroxycyclohexa-1,3-dien-1-yl)prop-2-enoate + NAD(+). Its pathway is aromatic compound metabolism; 3-phenylpropanoate degradation. In terms of biological role, part of the multicomponent 3-phenylpropionate dioxygenase. Converts 3-phenylpropionic acid (PP) and cinnamic acid (CI) into 3-phenylpropionate-dihydrodiol (PP-dihydrodiol) and cinnamic acid-dihydrodiol (CI-dihydrodiol), respectively. In Escherichia coli O139:H28 (strain E24377A / ETEC), this protein is 3-phenylpropionate/cinnamic acid dioxygenase subunit beta.